An 86-amino-acid polypeptide reads, in one-letter code: Cytochrome c oxidase subunit 6B1 (86 aa).

A2 carries the post-translational modification N-acetylalanine. The region spanning 27–73 (TRNCWQNYLDFHRCQKAMTAKGGDISVCEWYQRVYQSLCPTSWVTDW) is the CHCH domain. Residues 30–40 (CWQNYLDFHRC) carry the Cx9C motif motif. Cystine bridges form between C30–C65 and C40–C54. Residues 54 to 65 (CEWYQRVYQSLC) carry the Cx10C motif motif.

Belongs to the cytochrome c oxidase subunit 6B family. Component of the cytochrome c oxidase (complex IV, CIV), a multisubunit enzyme composed of 14 subunits. The complex is composed of a catalytic core of 3 subunits MT-CO1, MT-CO2 and MT-CO3, encoded in the mitochondrial DNA, and 11 supernumerary subunits COX4I1 (or COX4I2), COX5A, COX5B, COX6A1 (or COX6A2), COX6B1 (or COX6B2), COX6C, COX7A2 (or COX7A1), COX7B, COX7C, COX8A and NDUFA4, which are encoded in the nuclear genome. The complex exists as a monomer or a dimer and forms supercomplexes (SCs) in the inner mitochondrial membrane with NADH-ubiquinone oxidoreductase (complex I, CI) and ubiquinol-cytochrome c oxidoreductase (cytochrome b-c1 complex, complex III, CIII), resulting in different assemblies (supercomplex SCI(1)III(2)IV(1) and megacomplex MCI(2)III(2)IV(2)).

It localises to the mitochondrion inner membrane. The protein operates within energy metabolism; oxidative phosphorylation. In terms of biological role, component of the cytochrome c oxidase, the last enzyme in the mitochondrial electron transport chain which drives oxidative phosphorylation. The respiratory chain contains 3 multisubunit complexes succinate dehydrogenase (complex II, CII), ubiquinol-cytochrome c oxidoreductase (cytochrome b-c1 complex, complex III, CIII) and cytochrome c oxidase (complex IV, CIV), that cooperate to transfer electrons derived from NADH and succinate to molecular oxygen, creating an electrochemical gradient over the inner membrane that drives transmembrane transport and the ATP synthase. Cytochrome c oxidase is the component of the respiratory chain that catalyzes the reduction of oxygen to water. Electrons originating from reduced cytochrome c in the intermembrane space (IMS) are transferred via the dinuclear copper A center (CU(A)) of subunit 2 and heme A of subunit 1 to the active site in subunit 1, a binuclear center (BNC) formed by heme A3 and copper B (CU(B)). The BNC reduces molecular oxygen to 2 water molecules using 4 electrons from cytochrome c in the IMS and 4 protons from the mitochondrial matrix. This chain is Cytochrome c oxidase subunit 6B1 (COX6B1), found in Homo sapiens (Human).